Here is a 306-residue protein sequence, read N- to C-terminus: Ubiquitin carboxyl-terminal hydrolase RPN11 (306 aa).

An N-acetylmethionine modification is found at Met-1. The tract at residues 1–20 (MERLQRLMMNSKVGSADTGR) is disordered. In terms of domain architecture, MPN spans 27–162 (VYISSIALLK…IDAFRLIDTG (136 aa)). Residues His-109, His-111, and Asp-122 each contribute to the Zn(2+) site. The JAMM motif signature appears at 109–122 (HSHPGFGCWLSSVD).

Belongs to the peptidase M67A family. Component of the lid subcomplex of the 19S proteasome regulatory particle complex (also named PA700 complex). The 26S proteasome consists of a 20S proteasome core and two 19S regulatory subunits. Interacts directly with RPN8 and STS1. N-acetylated by NAT3.

It carries out the reaction Thiol-dependent hydrolysis of ester, thioester, amide, peptide and isopeptide bonds formed by the C-terminal Gly of ubiquitin (a 76-residue protein attached to proteins as an intracellular targeting signal).. In terms of biological role, component of the lid subcomplex of the 26S proteasome, a multiprotein complex involved in the ATP-dependent degradation of ubiquitinated proteins. RPN11 is the only catalytically active member of the lid and serves as the essential deubiquitinase of the proteasome. The sequence is that of Ubiquitin carboxyl-terminal hydrolase RPN11 (RPN11) from Saccharomyces cerevisiae (strain ATCC 204508 / S288c) (Baker's yeast).